We begin with the raw amino-acid sequence, 84 residues long: Delta-stichotoxin-Shd3a (84 aa).

The N-terminal stretch at 1–19 (MAYLKIVLVALMLVLGVSA) is a signal peptide. A propeptide spanning residues 20 to 33 (MRLSDQEDQDVSVV) is cleaved from the precursor. 3 cysteine pairs are disulfide-bonded: C38–C78, C40–C68, and C61–C79. K83 is subject to Lysine amide.

This sequence belongs to the sea anemone sodium channel inhibitory toxin family. Type II subfamily.

Its subcellular location is the secreted. It is found in the nematocyst. In terms of biological role, binds specifically to voltage-gated sodium channels (Nav), thereby delaying their inactivation during signal transduction. In Stichodactyla haddoni (Saddle carpet anemone), this protein is Delta-stichotoxin-Shd3a.